Consider the following 272-residue polypeptide: DNA repair protein RecO (272 aa).

It belongs to the RecO family.

Functionally, involved in DNA repair and RecF pathway recombination. The sequence is that of DNA repair protein RecO from Limosilactobacillus fermentum (strain NBRC 3956 / LMG 18251) (Lactobacillus fermentum).